We begin with the raw amino-acid sequence, 386 residues long: Formate-dependent phosphoribosylglycinamide formyltransferase (386 aa).

N(1)-(5-phospho-beta-D-ribosyl)glycinamide is bound by residues 15–16 (EL) and E75. Residues R107, K148, 153 to 158 (SSGKGQ), 188 to 191 (EQFI), and E196 contribute to the ATP site. The region spanning 112-301 (ALAVQQLNLQ…EFELHLRAIV (190 aa)) is the ATP-grasp domain. Residues E260 and E272 each coordinate Mg(2+). Residues D279, K349, and 356 to 357 (RR) contribute to the N(1)-(5-phospho-beta-D-ribosyl)glycinamide site.

The protein belongs to the PurK/PurT family. In terms of assembly, homodimer.

It catalyses the reaction N(1)-(5-phospho-beta-D-ribosyl)glycinamide + formate + ATP = N(2)-formyl-N(1)-(5-phospho-beta-D-ribosyl)glycinamide + ADP + phosphate + H(+). It functions in the pathway purine metabolism; IMP biosynthesis via de novo pathway; N(2)-formyl-N(1)-(5-phospho-D-ribosyl)glycinamide from N(1)-(5-phospho-D-ribosyl)glycinamide (formate route): step 1/1. Functionally, involved in the de novo purine biosynthesis. Catalyzes the transfer of formate to 5-phospho-ribosyl-glycinamide (GAR), producing 5-phospho-ribosyl-N-formylglycinamide (FGAR). Formate is provided by PurU via hydrolysis of 10-formyl-tetrahydrofolate. The chain is Formate-dependent phosphoribosylglycinamide formyltransferase from Francisella tularensis subsp. holarctica (strain LVS).